The primary structure comprises 190 residues: Large ribosomal subunit protein bL25 (190 aa).

The disordered stretch occupies residues 1-20 (MSEQKTLSVQKRDNLGKGAN).

It belongs to the bacterial ribosomal protein bL25 family. CTC subfamily. Part of the 50S ribosomal subunit; part of the 5S rRNA/L5/L18/L25 subcomplex. Contacts the 5S rRNA. Binds to the 5S rRNA independently of L5 and L18.

In terms of biological role, this is one of the proteins that binds to the 5S RNA in the ribosome where it forms part of the central protuberance. The polypeptide is Large ribosomal subunit protein bL25 (Nitratidesulfovibrio vulgaris (strain ATCC 29579 / DSM 644 / CCUG 34227 / NCIMB 8303 / VKM B-1760 / Hildenborough) (Desulfovibrio vulgaris)).